The sequence spans 269 residues: Expansin-B1 (269 aa).

A signal peptide spans 1–24 (MGSLANNIMVVGAVLAALVAGGSC). Asn34 carries N-linked (GlcNAc...) asparagine glycosylation. The region spanning 63–169 (GGACGIKNVN…RRVRCKYPAG (107 aa)) is the Expansin-like EG45 domain. Disulfide bonds link Cys66–Cys94, Cys97–Cys164, and Cys102–Cys108. The Expansin-like CBD domain occupies 183-264 (NYLAVLVKYV…NWRPDAVYTS (82 aa)).

Belongs to the expansin family. Expansin B subfamily. As to expression, expressed in anthers and pollen.

The protein resides in the secreted. The protein localises to the cell wall. Its subcellular location is the membrane. May aid fertilization by loosening the cell wall of the stigma and style, thereby facilitating penetration of the pollen tube. Acts selectively on grass cell walls, which are relatively poor in pectins and xyloglucans and rich in glucuronoarabinoxylans and (1-3),(1-4)-beta-D-glucans, when compared with cell walls of other angiosperms, including other monocots. In Zea mays (Maize), this protein is Expansin-B1 (EXPB1).